The primary structure comprises 626 residues: Mini-chromosome maintenance complex-binding protein (626 aa).

Disordered regions lie at residues 152 to 216 and 265 to 287; these read STSY…LDLN and PSSLLLNPSESMESPEEQRAHDP. Over residues 177 to 196 the composition is skewed to basic and acidic residues; sequence KQREPHTEPHGNGDSKRQET. Residues 197–210 show a composition bias toward polar residues; it reads EAPSSQTTAPSDCS.

It belongs to the MCMBP family. As to quaternary structure, interacts with the mcm complex: associates with the mcm3-7 complex which lacks mcm2, while it does not interact with the mcm complex when mcm2 is present (mcm2-7 complex).

The protein localises to the nucleus. Functionally, associated component of the mcm complex that acts as a regulator of DNA replication. Binds to the MCM complex during late S phase and promotes the disassembly of the mcm complex from chromatin, thereby acting as a key regulator of pre-replication complex (pre-RC) unloading from replicated DNA. Can dissociate the mcm complex without addition of ATP; probably acts by destabilizing interactions of each individual subunits of the mcm complex. Required for sister chromatid cohesion. The protein is Mini-chromosome maintenance complex-binding protein (mcmbp) of Salmo salar (Atlantic salmon).